Here is a 295-residue protein sequence, read N- to C-terminus: MQRQRANDTVTTFRYNTRSSSRHGISNTLRVVESKTSASSPRVRRWRKKVSDDRRSTNSDLLPMDLIKEILKRLPAKTLARFLCVSKLWSSIIRSRDLMKLFLTESSARPGRLFFTFRRKDDCFLFSSEESSVATYLFTIPASGYTNNCSFVHGLICYGTTAYASQLVVYNSSTRRSITLPEIEARSFVLKHLLGYDPIDGVYKVLCMTVPRLVLQKKKKLRNNVTDAGELILAPISLPDPPYYVIYYDPQRQSTRKVVIRGITEHNCKLLRCKKRHPCILYYVFSSQVESLMFM.

Residues 56-102 enclose the F-box domain; sequence STNSDLLPMDLIKEILKRLPAKTLARFLCVSKLWSSIIRSRDLMKLF.

This chain is Putative F-box protein At5g44220, found in Arabidopsis thaliana (Mouse-ear cress).